Here is a 106-residue protein sequence, read N- to C-terminus: Flagellar transcriptional regulator FlhD (106 aa).

Belongs to the FlhD family. Homodimer; disulfide-linked. Forms a heterohexamer composed of two FlhC and four FlhD subunits. Each FlhC binds a FlhD dimer, forming a heterotrimer, and a hexamer assembles by dimerization of two heterotrimers.

It localises to the cytoplasm. Functions in complex with FlhC as a master transcriptional regulator that regulates transcription of several flagellar and non-flagellar operons by binding to their promoter region. Activates expression of class 2 flagellar genes, including fliA, which is a flagellum-specific sigma factor that turns on the class 3 genes. Also regulates genes whose products function in a variety of physiological pathways. The chain is Flagellar transcriptional regulator FlhD from Burkholderia mallei (strain SAVP1).